Here is a 114-residue protein sequence, read N- to C-terminus: Hydrogenase maturation factor HypA (114 aa).

His-2 lines the Ni(2+) pocket. Residues Cys-73, Cys-76, Cys-89, and Cys-92 each contribute to the Zn(2+) site.

This sequence belongs to the HypA/HybF family.

In terms of biological role, involved in the maturation of [NiFe] hydrogenases. Required for nickel insertion into the metal center of the hydrogenase. This chain is Hydrogenase maturation factor HypA, found in Azoarcus sp. (strain BH72).